The sequence spans 388 residues: Probable E3 ubiquitin-protein ligase LOG2 (388 aa).

A disordered region spans residues 1–43 (MGNISSSGGEGRRRRRRNHTAAPPPPPPPPSSSLPPPPLPTEI). Gly2 carries N-myristoyl glycine lipidation. The span at 22-40 (APPPPPPPPSSSLPPPPLP) shows a compositional bias: pro residues. Positions 159–281 (FTFDATVSGR…GEIKIRVVKQ (123 aa)) are DAR2 domain. The RING-type; atypical zinc-finger motif lies at 319–358 (CVICLSEPRDTTVLPCRHMCMCSGCAKVLRFQTNRCPICR). A disordered region spans residues 368-388 (KVHGNNGSGNNTGQGETVEQE).

It belongs to the RING-type zinc finger family. LOG2 subfamily. In terms of assembly, interacts with GDU1. Post-translationally, myristoylated (in vitro). As to expression, expressed in the vascular tissues in both phloem and xylem parenchyma cells.

The protein resides in the cell membrane. It catalyses the reaction S-ubiquitinyl-[E2 ubiquitin-conjugating enzyme]-L-cysteine + [acceptor protein]-L-lysine = [E2 ubiquitin-conjugating enzyme]-L-cysteine + N(6)-ubiquitinyl-[acceptor protein]-L-lysine.. Its pathway is protein modification; protein ubiquitination. Its function is as follows. Acts as an E3 ubiquitin-protein ligase, or as part of E3 complex, which accepts ubiquitin from specific E2 ubiquitin-conjugating enzymes and then transfers it to substrates (in vitro). Required for GLUTAMINE DUMPER 1(GDU1)-induced amino acid secretion and for amino acid homeostasis. Ubiquitinates GDU1 (in vitro). This chain is Probable E3 ubiquitin-protein ligase LOG2 (LOG2), found in Arabidopsis thaliana (Mouse-ear cress).